The primary structure comprises 619 residues: Lateral signaling target protein 2 homolog (619 aa).

An FYVE-type zinc finger spans residues 501 to 561 (DSDCEQCTAC…VCNLCFLYKI (61 aa)). Cys507, Cys510, Cys523, Cys526, Cys531, Cys534, Cys553, and Cys556 together coordinate Zn(2+). Residues 598 to 619 (HERSQDGSQSNESPTATTATTI) form a disordered region. Positions 603-619 (DGSQSNESPTATTATTI) are enriched in polar residues.

The protein belongs to the lst-2 family.

Its function is as follows. Negative regulator of epidermal growth factor receptor (EGFR) signaling. This chain is Lateral signaling target protein 2 homolog, found in Brugia malayi (Filarial nematode worm).